The sequence spans 543 residues: Small conductance calcium-activated potassium channel protein 1 (543 aa).

The interval 1–92 (MNSHSYNGSV…SGKPSNVGHR (92 aa)) is disordered. Residues 65–76 (DQDDDEDDEEDE) show a composition bias toward acidic residues. A helical membrane pass occupies residues 111-131 (LIFGMFGIVVMVTETELSWGV). Residues 140–160 (FALKCLISLSTAILLGLVVLY) form a helical membrane-spanning segment. The chain crosses the membrane as a helical span at residues 179-199 (IAMTCERVFLISLELAVCAIH). The chain crosses the membrane as a helical span at residues 228–248 (VLLSIPMFLRLYLLGRVMLLH). The chain crosses the membrane as a helical span at residues 277–297 (LMTICPGTVLLVFSISSWIIA). The pore-forming intramembrane region spans 317 to 337 (FLGAMWLISITFLSIGYGDMV). The helical transmembrane segment at 346-366 (VCLLTGIMGAGCTALVVAVVA) threads the bilayer. The calmodulin-binding stretch occupies residues 384 to 463 (DTQLTKRVKN…LTDLAKTQTV (80 aa)). A disordered region spans residues 505–543 (QAIRPPPPPLPPRPGPGPQDQAARSSPCRWTPVAPSDCG). Pro residues predominate over residues 508–521 (RPPPPPLPPRPGPG).

It belongs to the potassium channel KCNN family. KCa2.1/KCNN1 subfamily. Homodimer. Heteromultimer with KCNN2 and KCNN3. The complex is composed of 4 channel subunits each of which binds to a calmodulin subunit which regulates the channel activity through calcium-binding. Interacts with calmodulin.

The protein resides in the membrane. The protein localises to the cytoplasm. Its subcellular location is the myofibril. It localises to the sarcomere. It is found in the z line. It catalyses the reaction K(+)(in) = K(+)(out). With respect to regulation, inhibited by bee venom neurotoxin apamin. Inhibited by d-tubocurarine and tetraethylammonium (TEA). Functionally, small conductance calcium-activated potassium channel that mediates the voltage-independent transmembrane transfer of potassium across the cell membrane through a constitutive interaction with calmodulin which binds the intracellular calcium allowing its opening. The current is characterized by a voltage-independent activation, an intracellular calcium concentration increase-dependent activation and a single-channel conductance of about 3 picosiemens. Also presents an inwardly rectifying current, thus reducing its already small outward conductance of potassium ions, which is particularly the case when the membrane potential displays positive values, above + 20 mV. Activation is followed by membrane hyperpolarization. Thought to regulate neuronal excitability by contributing to the slow component of synaptic afterhyperpolarization. The protein is Small conductance calcium-activated potassium channel protein 1 of Homo sapiens (Human).